Reading from the N-terminus, the 638-residue chain is Plasma kallikrein (638 aa).

A signal peptide spans 1-19 (MILFKQATYFISLFATVSC). Apple domains follow at residues 21 to 104 (CLTQ…LKQC), 111 to 194 (CHRD…LKPC), 201 to 284 (CHMN…LLTC), and 292 to 375 (CHSK…LRLC). Intrachain disulfides connect cysteine 21–cysteine 104, cysteine 47–cysteine 77, cysteine 51–cysteine 57, cysteine 111–cysteine 194, cysteine 137–cysteine 166, cysteine 141–cysteine 147, cysteine 201–cysteine 284, cysteine 227–cysteine 256, cysteine 231–cysteine 237, cysteine 292–cysteine 375, cysteine 318–cysteine 347, cysteine 322–cysteine 328, cysteine 340–cysteine 345, cysteine 383–cysteine 503, cysteine 419–cysteine 435, cysteine 517–cysteine 584, cysteine 548–cysteine 563, and cysteine 574–cysteine 602. Residue asparagine 127 is glycosylated (N-linked (GlcNAc...) asparagine). Asparagine 308 carries an N-linked (GlcNAc...) asparagine glycan. The Peptidase S1 domain maps to 391–626 (IVGGTNSSWG…YMDWILEKTQ (236 aa)). Residue asparagine 396 is glycosylated (N-linked (GlcNAc...) asparagine). Histidine 434 acts as the Charge relay system in catalysis. Asparagine 453 carries an N-linked (GlcNAc...) asparagine glycan. Aspartate 483 (charge relay system) is an active-site residue. The N-linked (GlcNAc...) asparagine glycan is linked to asparagine 494. Serine 578 acts as the Charge relay system in catalysis.

The protein belongs to the peptidase S1 family. Plasma kallikrein subfamily. Forms a heterodimer with SERPINA5. The zymogen is activated by factor XIIa, which cleaves the molecule into a light chain, which contains the active site, and a heavy chain, which associates with HMW kininogen. These chains are linked by one or more disulfide bonds. Interacts with iripin-3, a serine protease inhibitor from Ixodes ricinus saliva. Interacts with iripin-1, a serine protease inhibitor from Ixodes ricinus saliva. In terms of tissue distribution, found in plasma (at protein level).

It is found in the secreted. It catalyses the reaction Cleaves selectively Arg-|-Xaa and Lys-|-Xaa bonds, including Lys-|-Arg and Arg-|-Ser bonds in (human) kininogen to release bradykinin.. Inhibited by SERPINA5. In terms of biological role, participates in the surface-dependent activation of blood coagulation. Activates, in a reciprocal reaction, coagulation factor XII/F12 after binding to negatively charged surfaces. Releases bradykinin from HMW kininogen and may also play a role in the renin-angiotensin system by converting prorenin into renin. This chain is Plasma kallikrein (KLKB1), found in Homo sapiens (Human).